Consider the following 375-residue polypeptide: uncharacterized protein (375 aa).

Belongs to the mimivirus L17x/L18x family.

This is an uncharacterized protein from Acanthamoeba polyphaga mimivirus (APMV).